Reading from the N-terminus, the 478-residue chain is UDP-glycosyltransferase 90A1 (478 aa).

Residues T289, 343-345 (VDQ), 360-368 (HCGWNSAQE), and 382-385 (MAEQ) each bind UDP-alpha-D-glucose.

The protein belongs to the UDP-glycosyltransferase family.

The polypeptide is UDP-glycosyltransferase 90A1 (UGT90A1) (Arabidopsis thaliana (Mouse-ear cress)).